A 70-amino-acid polypeptide reads, in one-letter code: ATP synthase subunit c (70 aa).

Transmembrane regions (helical) follow at residues 4 to 24 (IATAIIIGLGALGAGIGNGLI) and 47 to 67 (FIGIGLVEALPIIGVAVGFLL).

Belongs to the ATPase C chain family. In terms of assembly, F-type ATPases have 2 components, F(1) - the catalytic core - and F(0) - the membrane proton channel. F(1) has five subunits: alpha(3), beta(3), gamma(1), delta(1), epsilon(1). F(0) has three main subunits: a(1), b(2) and c(10-14). The alpha and beta chains form an alternating ring which encloses part of the gamma chain. F(1) is attached to F(0) by a central stalk formed by the gamma and epsilon chains, while a peripheral stalk is formed by the delta and b chains.

Its subcellular location is the cell membrane. Its function is as follows. F(1)F(0) ATP synthase produces ATP from ADP in the presence of a proton or sodium gradient. F-type ATPases consist of two structural domains, F(1) containing the extramembraneous catalytic core and F(0) containing the membrane proton channel, linked together by a central stalk and a peripheral stalk. During catalysis, ATP synthesis in the catalytic domain of F(1) is coupled via a rotary mechanism of the central stalk subunits to proton translocation. Functionally, key component of the F(0) channel; it plays a direct role in translocation across the membrane. A homomeric c-ring of between 10-14 subunits forms the central stalk rotor element with the F(1) delta and epsilon subunits. The protein is ATP synthase subunit c of Exiguobacterium sibiricum (strain DSM 17290 / CCUG 55495 / CIP 109462 / JCM 13490 / 255-15).